A 383-amino-acid chain; its full sequence is Succinyl-diaminopimelate desuccinylase (383 aa).

Histidine 69 is a binding site for Zn(2+). The active site involves aspartate 71. Aspartate 103 is a Zn(2+) binding site. Glutamate 137 (proton acceptor) is an active-site residue. 3 residues coordinate Zn(2+): glutamate 138, glutamate 166, and histidine 357.

The protein belongs to the peptidase M20A family. DapE subfamily. Homodimer. It depends on Zn(2+) as a cofactor. The cofactor is Co(2+).

The catalysed reaction is N-succinyl-(2S,6S)-2,6-diaminopimelate + H2O = (2S,6S)-2,6-diaminopimelate + succinate. It functions in the pathway amino-acid biosynthesis; L-lysine biosynthesis via DAP pathway; LL-2,6-diaminopimelate from (S)-tetrahydrodipicolinate (succinylase route): step 3/3. Its function is as follows. Catalyzes the hydrolysis of N-succinyl-L,L-diaminopimelic acid (SDAP), forming succinate and LL-2,6-diaminopimelate (DAP), an intermediate involved in the bacterial biosynthesis of lysine and meso-diaminopimelic acid, an essential component of bacterial cell walls. This Rickettsia prowazekii (strain Madrid E) protein is Succinyl-diaminopimelate desuccinylase.